A 790-amino-acid polypeptide reads, in one-letter code: MIDSVKLRRDCAADFFSHYEYLCALQDSVPLPAVRACLRDGVLDFNADRLRAVDWAPLLSTLRVNRDLPLVAIKSSFQPWLGETVLRSGGADTHRICRNRVPAVRSKDISFQLCKALRGCLSVSGVLRNLELNGLILRERDLTSLTKGLSKSTSLVHLSLANCPIGDGGLEIICQGIKNSVTLKTVNFTGCNLTWQGACHMAKILKYQTMRRHEETWAESLRYRRPDLDCMAGLRRITLNCNTLIGDQGASAFADSLSEDLWLRALDLQQCGLTSEGAKALLEALETNRTLVVLDIRKNPLIDHSMMKAVIKKVLQNGRSADSEYQWVTSPSSKEPSKTAKQRKKTIVLGSSRKGKATIRIGLATKKPSSNGRKQGLGKDCYAPNPLPPGASGFLPWRTAERAKRSRSSSLIKTRDLSNHLKKSDFPVTVTVESPSSSETDETEDSSESVQEAPQKTSIKEETLQEKLEECLRQLKEERVIRLKADKRVSELEHENAQLRNINFSLSEALHAQSLTNMILDDEGVLGSIENSFQKFHAFLDLLKDAGLGQLATMAGIDQSDFHLLGRPQMNSTVNTPIQEQKALEDETLHPKQTATGQMQDIRFQKITSDALIPLPLNTVQDPASAQEAVGASRDHLGVVGLEQQEGSAAGFIAKTGSPLAGGIPGGRSQREEEVLSKHSRSSSEKGSTASEPSRRPSAERHPRKDLLSDADPPGNSESKGPGDRRSLLNEPIKSESLKKCISIKKENRIVTVSSKTIKSKPNLLEHSESDTLGSDFELQERVHSSAHLT.

Disordered stretches follow at residues tyrosine 325 to lysine 345, glycine 362 to asparagine 385, valine 428 to glutamate 462, alanine 654 to proline 732, and lysine 756 to threonine 790. Phosphoserine is present on residues serine 330 and serine 332. Low complexity predominate over residues valine 428 to serine 438. Residues glutamine 455–leucine 510 adopt a coiled-coil conformation. Composition is skewed to basic and acidic residues over residues proline 693–leucine 708 and glycine 721–proline 732.

The protein belongs to the CEP78 family. In terms of assembly, interacts with PLK4. Interacts with FAM161A. Interacts with IFT20; regulating IFT20 stability and localization. Interacts with TTC21A; regulating TTC21A stability and localization. Interacts with USP16; promoting USP16-dependent deubiquitination of tektins. Interacts with DCAF1/VPRBP; promoting localization of the EDVP complex to centrosomes. Interacts with CEP350; promoting CEP78 localization to centrosome and centriole. Expressed by photoreceptor cells in the retina.

Its subcellular location is the cytoplasm. It localises to the cytoskeleton. The protein resides in the microtubule organizing center. The protein localises to the centrosome. It is found in the centriole. Its subcellular location is the cilium basal body. Centriole wall protein that localizes to mature centrioles and regulates centriole and cilia biogenesis. Involved in centrosome duplication: required for efficient PLK4 centrosomal localization and PLK4-induced overduplication of centrioles. Involved in cilium biogenesis and controls cilium length. Acts as a regulator of protein stability by preventing ubiquitination of centrosomal proteins, such as CCP110 and tektins. Associates with the EDVP complex, preventing ubiquitination and degradation of CCP110. Promotes deubiquitination of tektin proteins (TEKT1, TEKT2, TEK3, TEKT4 and TEKT5) via its interaction with USP16. This is Centrosomal protein of 78 kDa from Mus musculus (Mouse).